We begin with the raw amino-acid sequence, 181 residues long: ATP synthase subunit b, chloroplastic (181 aa).

A helical membrane pass occupies residues 27–49; sequence LATNPINLSVVLGVVIYFGKGVL.

This sequence belongs to the ATPase B chain family. F-type ATPases have 2 components, F(1) - the catalytic core - and F(0) - the membrane proton channel. F(1) has five subunits: alpha(3), beta(3), gamma(1), delta(1), epsilon(1). F(0) has four main subunits: a(1), b(1), b'(1) and c(10-14). The alpha and beta chains form an alternating ring which encloses part of the gamma chain. F(1) is attached to F(0) by a central stalk formed by the gamma and epsilon chains, while a peripheral stalk is formed by the delta, b and b' chains.

Its subcellular location is the plastid. The protein localises to the chloroplast thylakoid membrane. Its function is as follows. F(1)F(0) ATP synthase produces ATP from ADP in the presence of a proton or sodium gradient. F-type ATPases consist of two structural domains, F(1) containing the extramembraneous catalytic core and F(0) containing the membrane proton channel, linked together by a central stalk and a peripheral stalk. During catalysis, ATP synthesis in the catalytic domain of F(1) is coupled via a rotary mechanism of the central stalk subunits to proton translocation. Functionally, component of the F(0) channel, it forms part of the peripheral stalk, linking F(1) to F(0). This chain is ATP synthase subunit b, chloroplastic, found in Lemna minor (Common duckweed).